Consider the following 78-residue polypeptide: MPKRILQGTVVSDKNDKTVVVRVERRFAHPILQKTVRRSKKYKAHDENNQFKVGDLVSIEECAPISKDKRWTVVSAQS.

Belongs to the universal ribosomal protein uS17 family. Part of the 30S ribosomal subunit.

One of the primary rRNA binding proteins, it binds specifically to the 5'-end of 16S ribosomal RNA. This is Small ribosomal subunit protein uS17 from Rhizobium meliloti (strain 1021) (Ensifer meliloti).